Here is a 362-residue protein sequence, read N- to C-terminus: Heat-inducible transcription repressor HrcA (362 aa).

Belongs to the HrcA family.

Functionally, negative regulator of class I heat shock genes (grpE-dnaK-dnaJ and groELS operons). Prevents heat-shock induction of these operons. The chain is Heat-inducible transcription repressor HrcA from Rhizobium rhizogenes (strain K84 / ATCC BAA-868) (Agrobacterium radiobacter).